The chain runs to 90 residues: Cell division topological specificity factor (90 aa).

The protein belongs to the MinE family.

Its function is as follows. Prevents the cell division inhibition by proteins MinC and MinD at internal division sites while permitting inhibition at polar sites. This ensures cell division at the proper site by restricting the formation of a division septum at the midpoint of the long axis of the cell. This Francisella philomiragia subsp. philomiragia (strain ATCC 25017 / CCUG 19701 / FSC 153 / O#319-036) protein is Cell division topological specificity factor.